Reading from the N-terminus, the 517-residue chain is Crotonobetaine/carnitine--CoA ligase (517 aa).

The protein belongs to the ATP-dependent AMP-binding enzyme family.

It catalyses the reaction 4-(trimethylamino)butanoate + ATP + CoA = 4-(trimethylamino)butanoyl-CoA + AMP + diphosphate. It carries out the reaction crotonobetaine + ATP + CoA = crotonobetainyl-CoA + AMP + diphosphate. The enzyme catalyses (R)-carnitine + ATP + CoA = (R)-carnitinyl-CoA + AMP + diphosphate. The protein operates within amine and polyamine metabolism; carnitine metabolism. Functionally, catalyzes the transfer of CoA to carnitine, generating the initial carnitinyl-CoA needed for the CaiB reaction cycle. Also has activity toward crotonobetaine and gamma-butyrobetaine. In Salmonella typhi, this protein is Crotonobetaine/carnitine--CoA ligase.